The primary structure comprises 89 residues: Small ribosomal subunit protein bS20 (89 aa).

Belongs to the bacterial ribosomal protein bS20 family.

Functionally, binds directly to 16S ribosomal RNA. The protein is Small ribosomal subunit protein bS20 of Helicobacter pylori (strain Shi470).